We begin with the raw amino-acid sequence, 194 residues long: Small ribosomal subunit protein uS7 (194 aa).

This sequence belongs to the universal ribosomal protein uS7 family. In terms of assembly, part of the 30S ribosomal subunit.

Its function is as follows. One of the primary rRNA binding proteins, it binds directly to 16S rRNA where it nucleates assembly of the head domain of the 30S subunit. Is located at the subunit interface close to the decoding center. The chain is Small ribosomal subunit protein uS7 from Methanospirillum hungatei JF-1 (strain ATCC 27890 / DSM 864 / NBRC 100397 / JF-1).